Reading from the N-terminus, the 459-residue chain is Bifunctional protein GlmU (459 aa).

The tract at residues 1–230 (MSNRFAVILA…FDETLGVNDR (230 aa)) is pyrophosphorylase. UDP-N-acetyl-alpha-D-glucosamine is bound by residues 9 to 12 (LAAG), lysine 23, glutamine 73, and 78 to 79 (GT). Aspartate 103 provides a ligand contact to Mg(2+). UDP-N-acetyl-alpha-D-glucosamine is bound by residues glycine 140, glutamate 155, asparagine 170, and asparagine 228. Asparagine 228 serves as a coordination point for Mg(2+). Positions 231–251 (VALSQAEIIMKNRINRKNMVN) are linker. The interval 252–459 (GVTIIDPSNT…VDQLLNKKKS (208 aa)) is N-acetyltransferase. UDP-N-acetyl-alpha-D-glucosamine-binding residues include arginine 333 and lysine 351. Histidine 363 serves as the catalytic Proton acceptor. UDP-N-acetyl-alpha-D-glucosamine contacts are provided by tyrosine 366 and asparagine 377. Residues 386-387 (NY), alanine 423, and arginine 440 contribute to the acetyl-CoA site.

The protein in the N-terminal section; belongs to the N-acetylglucosamine-1-phosphate uridyltransferase family. In the C-terminal section; belongs to the transferase hexapeptide repeat family. In terms of assembly, homotrimer. Requires Mg(2+) as cofactor.

It localises to the cytoplasm. The enzyme catalyses alpha-D-glucosamine 1-phosphate + acetyl-CoA = N-acetyl-alpha-D-glucosamine 1-phosphate + CoA + H(+). The catalysed reaction is N-acetyl-alpha-D-glucosamine 1-phosphate + UTP + H(+) = UDP-N-acetyl-alpha-D-glucosamine + diphosphate. Its pathway is nucleotide-sugar biosynthesis; UDP-N-acetyl-alpha-D-glucosamine biosynthesis; N-acetyl-alpha-D-glucosamine 1-phosphate from alpha-D-glucosamine 6-phosphate (route II): step 2/2. The protein operates within nucleotide-sugar biosynthesis; UDP-N-acetyl-alpha-D-glucosamine biosynthesis; UDP-N-acetyl-alpha-D-glucosamine from N-acetyl-alpha-D-glucosamine 1-phosphate: step 1/1. It participates in bacterial outer membrane biogenesis; LPS lipid A biosynthesis. In terms of biological role, catalyzes the last two sequential reactions in the de novo biosynthetic pathway for UDP-N-acetylglucosamine (UDP-GlcNAc). The C-terminal domain catalyzes the transfer of acetyl group from acetyl coenzyme A to glucosamine-1-phosphate (GlcN-1-P) to produce N-acetylglucosamine-1-phosphate (GlcNAc-1-P), which is converted into UDP-GlcNAc by the transfer of uridine 5-monophosphate (from uridine 5-triphosphate), a reaction catalyzed by the N-terminal domain. The sequence is that of Bifunctional protein GlmU from Bacillus cereus (strain AH187).